We begin with the raw amino-acid sequence, 198 residues long: Small ribosomal subunit protein uS4 (198 aa).

Residues 91–154 enclose the S4 RNA-binding domain; sequence SRLDNVVYRL…KNLNIVQEAL (64 aa).

Belongs to the universal ribosomal protein uS4 family. As to quaternary structure, part of the 30S ribosomal subunit. Contacts protein S5. The interaction surface between S4 and S5 is involved in control of translational fidelity.

Its function is as follows. One of the primary rRNA binding proteins, it binds directly to 16S rRNA where it nucleates assembly of the body of the 30S subunit. In terms of biological role, with S5 and S12 plays an important role in translational accuracy. This is Small ribosomal subunit protein uS4 from Aster yellows witches'-broom phytoplasma (strain AYWB).